A 28-amino-acid polypeptide reads, in one-letter code: Omega-conotoxin-like CnVIIH (28 aa).

3 cysteine pairs are disulfide-bonded: cysteine 1–cysteine 16, cysteine 8–cysteine 20, and cysteine 15–cysteine 27. At proline 7 the chain carries 4-hydroxyproline; partial. Methionine 12 carries the methionine sulfoxide modification. Cysteine amide is present on cysteine 27.

This sequence belongs to the conotoxin O1 superfamily. In terms of tissue distribution, expressed by the venom duct.

It is found in the secreted. In terms of biological role, omega-conotoxins act at presynaptic membranes, they bind and block voltage-gated calcium channels (Cav). This toxin blocks N-type calcium channels (Cav2.2/CACNA1B) with high potency. Unexpectedly, it does not show any blocking activity at amphibian neuromuscular junction. In vivo, when intracerebroventricularly injected into mice causes shaking activity, and, at higher doses, causes mild tremors. When injected intramuscularly into fish, it causes paralysis, and, at higher doses, causes death. The sequence is that of Omega-conotoxin-like CnVIIH from Conus consors (Singed cone).